The chain runs to 482 residues: Glutamate--tRNA ligase (482 aa).

A 'HIGH' region motif is present at residues 9–19; sequence PSPTGPIHVGN. Zn(2+) contacts are provided by C106, C108, C133, and D135. Residues 250–254 carry the 'KMSKS' region motif; that stretch reads KLSKR. Residue K253 coordinates ATP.

This sequence belongs to the class-I aminoacyl-tRNA synthetase family. Glutamate--tRNA ligase type 1 subfamily. In terms of assembly, monomer. Zn(2+) is required as a cofactor.

Its subcellular location is the cytoplasm. It carries out the reaction tRNA(Glu) + L-glutamate + ATP = L-glutamyl-tRNA(Glu) + AMP + diphosphate. Its function is as follows. Catalyzes the attachment of glutamate to tRNA(Glu) in a two-step reaction: glutamate is first activated by ATP to form Glu-AMP and then transferred to the acceptor end of tRNA(Glu). The chain is Glutamate--tRNA ligase from Symbiobacterium thermophilum (strain DSM 24528 / JCM 14929 / IAM 14863 / T).